Reading from the N-terminus, the 83-residue chain is MSGNTGERPFADIITSIRYWVIHSITIPSLFIAGWLFVSTGLAYDVFGSPRPNEYFTENRQEVPLITGRFNSLEQVDEFTRSF.

A helical membrane pass occupies residues 21-35; sequence VIHSITIPSLFIAGW. A heme-binding site is contributed by histidine 23.

It belongs to the PsbE/PsbF family. As to quaternary structure, heterodimer of an alpha subunit and a beta subunit. PSII is composed of 1 copy each of membrane proteins PsbA, PsbB, PsbC, PsbD, PsbE, PsbF, PsbH, PsbI, PsbJ, PsbK, PsbL, PsbM, PsbT, PsbX, PsbY, PsbZ, Psb30/Ycf12, at least 3 peripheral proteins of the oxygen-evolving complex and a large number of cofactors. It forms dimeric complexes. The cofactor is heme b.

It is found in the plastid. The protein localises to the chloroplast thylakoid membrane. In terms of biological role, this b-type cytochrome is tightly associated with the reaction center of photosystem II (PSII). PSII is a light-driven water:plastoquinone oxidoreductase that uses light energy to abstract electrons from H(2)O, generating O(2) and a proton gradient subsequently used for ATP formation. It consists of a core antenna complex that captures photons, and an electron transfer chain that converts photonic excitation into a charge separation. This is Cytochrome b559 subunit alpha from Anthoceros angustus (Hornwort).